The primary structure comprises 750 residues: MGRSESQMDITDINTPKPKKKQRWTPLEISLSVLVLLLTVIAVTMIALYATYDDGICKSSDCIKSAARLIQNMDATAEPCTDFFKYACGGWLKRNVIPETSSRYSNFDILRDELEVILKDVLQEPKTEDIVAVQKAKTLYRSCVNETAIDSRGGQPLLKLLPDVYGWPVATQNWEQTYGTSWSAEKSIAQLNSNYGKKVLINFFVGTDDKNSMNHIIHIDQPRLGLPSRDYYECTGIYKEACTAYVDFMIAVAKLIRQEEGLPIDENQISVEMNKVMELEKEIANATTKSEDRNDPMLLYNKMTLAQIQNNFSLEINGKPFSWSNFTNEIMSTVNINIPNEEDVVVYAPEYLIKLKPILTKYFPRDFQNLFSWRFIMDLVSSLSRTYKDSRNAFRKALYGTTSESATWRRCANYVNGNMENAVGRLYVEAAFAGESKHVVEDLIAQIREVFIQTLDDLTWMDAETKKKAEEKALAIKERIGYPDDIVSNDNKLNNEYLELNYKEDEYFENIIQNLKFSQSKQLKKLREKVDKDEWITGAAIVNAFYSSGRNQIVFPAGILQPPFFSAQQSNSLNYGGIGMVIGHEITHGFDDNGRNFNKDGDLVDWWTQQSANNFKEQSQCMVYQYGNFSWDLAGGQHLNGINTLGENIADNGGIGQAYRAYQNYVKKNGEEKLLPGIDLNHKQLFFLNFAQVWCGTYRPEYAVNSIKTDVHSPGNFRIIGSLQNSVEFSEAFQCPKNSYMNPEKKCRVW.

Over residues 1–14 (MGRSESQMDITDIN) the composition is skewed to polar residues. Positions 1–20 (MGRSESQMDITDINTPKPKK) are disordered. Gly2 carries N-myristoyl glycine lipidation. The Cytoplasmic portion of the chain corresponds to 2 to 28 (GRSESQMDITDINTPKPKKKQRWTPLE). Residues Ser4 and Ser6 each carry the phosphoserine modification. Residues 16-23 (PKPKKKQR) carry the Stop-transfer sequence motif. A helical; Signal-anchor for type II membrane protein membrane pass occupies residues 29–51 (ISLSVLVLLLTVIAVTMIALYAT). Topologically, residues 52 to 750 (YDDGICKSSD…MNPEKKCRVW (699 aa)) are extracellular. The Peptidase M13 domain maps to 56-750 (ICKSSDCIKS…MNPEKKCRVW (695 aa)). Cystine bridges form between Cys57–Cys62, Cys80–Cys735, Cys88–Cys695, Cys143–Cys411, Cys234–Cys242, and Cys621–Cys747. Arg103 contributes to the a peptide binding site. Asn145 carries an N-linked (GlcNAc...) asparagine glycan. Residues Asn285, Asn311, and Asn325 are each glycosylated (N-linked (GlcNAc...) asparagine). His584 contacts Zn(2+). The active site involves Glu585. His588 is a Zn(2+) binding site. A glycan (N-linked (GlcNAc...) asparagine) is linked at Asn628. Residue Glu647 coordinates Zn(2+). The active-site Proton donor is Asp651.

The protein belongs to the peptidase M13 family. Zn(2+) is required as a cofactor. Post-translationally, myristoylation is a determinant of membrane targeting. Glycosylation at Asn-628 is necessary both for surface expression and neutral endopeptidase activity.

Its subcellular location is the cell membrane. It catalyses the reaction Preferential cleavage of polypeptides between hydrophobic residues, particularly with Phe or Tyr at P1'.. The enzyme catalyses substance P + H2O = substance P(1-9) + L-Leu-L-Met-NH2. It carries out the reaction substance P + H2O = substance P(1-7) + L-Phe-Gly-L-Leu-L-Met-NH2. The catalysed reaction is neurotensin + H2O = neurotensin(1-11) + L-isoleucyl-L-leucine. It catalyses the reaction neurotensin + H2O = neurotensin(1-10) + L-tyrosyl-L-isoleucyl-L-leucine. Its activity is regulated as follows. Inhibited by mixanpril, an orally-active drug used for the treatment of hypertension. Functionally, thermolysin-like specificity, but is almost confined on acting on polypeptides of up to 30 amino acids. Biologically important in the destruction of opioid peptides such as Met- and Leu-enkephalins by cleavage of a Gly-Phe bond. Catalyzes cleavage of bradykinin, substance P and neurotensin peptides. Able to cleave angiotensin-1, angiotensin-2 and angiotensin 1-9. Involved in the degradation of atrial natriuretic factor (ANF) and brain natriuretic factor (BNP(1-32)). Displays UV-inducible elastase activity toward skin preelastic and elastic fibers. The chain is Neprilysin (MME) from Oryctolagus cuniculus (Rabbit).